A 479-amino-acid chain; its full sequence is Proline--tRNA ligase (479 aa).

The protein belongs to the class-II aminoacyl-tRNA synthetase family. ProS type 3 subfamily. Homodimer.

It localises to the cytoplasm. It catalyses the reaction tRNA(Pro) + L-proline + ATP = L-prolyl-tRNA(Pro) + AMP + diphosphate. Functionally, catalyzes the attachment of proline to tRNA(Pro) in a two-step reaction: proline is first activated by ATP to form Pro-AMP and then transferred to the acceptor end of tRNA(Pro). The protein is Proline--tRNA ligase of Agathobacter rectalis (strain ATCC 33656 / DSM 3377 / JCM 17463 / KCTC 5835 / VPI 0990) (Eubacterium rectale).